We begin with the raw amino-acid sequence, 1680 residues long: MVVREAMIVPQTVQGGGKGVNGCSLVSNYQNSRDLCLQSAAMEQKSKGVIENCNLGPHDVGVGWKRNSSEGSISSMDSLPCGETVFSPSDPHNSVFRKPRRLGVSESDDESVIDQSQEESLLRKSKRSVMGGTVQPHSAMAQSVDEAAPDHSSTPSDDGKDFPSSRVKFMCSFGGKILPRPSDQQLRYVGGQTRIIGINRDVNFSELRNKMRESFGQCYTFKYQLPDEDLDALVTVSSDEDLENMMEEYDKLEADGSSRLRVFLFPADQDATSFDIDSTGDLRNSEQRYVDAVNGIAESSTRRISDGVLGASPVSSDLLGLELSEPSWGLARGPDAVPMAMLATHHDPNLIHQVPVAHPVSALTGNLSNRSNAPSAPSSAPSSPPLLARNLHGKLPLVGELHQFQYLQDSQFKGVGPQYTGMPSEVAHQDSESYGGSGGSSAASQHEMHYRSTDSRRGPESPPKKFHDALHQDHPITVEQRRLSGTKMPRIGSHGKLTRLSEHSELAPSSRVDSQQMPDIHMAPGELQRLFPQQVPLQQTLWPHAMDTQQDSYRRPDMLQSSGAQPAVSGQQQQGYQPQQQLQHLFRSGLSQTGANHEGAYRQGDQQQQSQQFQEDLHVNPNYIPRSVSSHAIAAGIAAGQSTSYHGSAPSSPRPGFRELPSRHLPGGPQLQHQWTFNGAGYVDQGFGRRVMNYPDQATRSFRLSSSPPRYRDHHPHSEERLHRQAQQVSEPLHHEQVPVSGQLKFETNSVSQAQYDLVPRPQVPQYKGHNPFQEKITSFQDHQEVGDIRRHVLQQGKDNQLLAGQQHLHSILQPQRIDYQESLKQQGDQSIPIHPRFQDGQEKVAEWMVQERALEEEEARKRVLGRIRQAELEEEAAAEAVVSQHKDTHQGVYAGLHLPNDEDLLTSSLGDYPSGNRRNERLESSISNAFPFRHLPPSVLGGYTAPKSRVNPTETSHVAQYVSRPVDTDYLAVAGLRGGGNGQDMRSAALFEVNGLQQTSGYQMPSGPHRLMEERLMPSAFNPITQLQKLRINDNLALNNDMRWSGSEDVRNEPSIPARDRMGGIYEDHHQGLPGLTLGRSAGKLSRPSSNTSIPNLLDETIGEGSLLPSGPSYGTQAQGTNLIDITQSISAIDNPLYSTSYASRLSNTSLGLDSPLVTSGGMLNSSLEGTSFSDYYKIKMGDDLPNAKMPSSKIPSAEDNLSRSSSSSLSELSKSGSEDGLGGQLTMDQRTVDMVVAALDLDRSGSVVQSVLESSDAKEASLSESVHDHSLGKLGSVVGSVGTQSVWPLDSAPTLAAGLWEKKLDEAGMTEETFERHITSDGTTFEELTADDHEVLASTVDKENQEEVRTGLDEPADEDKANSTGLGSDPAAKAIARGLQTIKNADLEELRELGSGTFGTVYHGKWRGTDVAIKRIKASCFAGRPSEQERLIEDFWREACNLGHLHHPNVVAFYGVVADGPGGTLATVTEYMVNGSLKQVLQKKDRTIDRRKRLLIAMDAAFGMEYLHGKNIVHFDLKCENLLVNMRDPHRPICKVGDLGLSKVKHQTMVSGGVRGTLPWMAPELLNGNSSLVTEKVDVFSFGIVMWELLTGEEPYDKMHYGAIIGGIVNNTLRPLIPSWCDPAWRSLMERCWANEPAVRPSFSDIAKELRTMAAALQPKTQAQTQGQSHPHPQMQIV.

The interval 86–163 is disordered; it reads FSPSDPHNSV…TPSDDGKDFP (78 aa). The 102-residue stretch at 166–267 folds into the PB1 domain; it reads RVKFMCSFGG…SRLRVFLFPA (102 aa). Disordered regions lie at residues 363 to 388, 417 to 516, 556 to 580, 594 to 613, 641 to 672, 700 to 725, and 1186 to 1226; these read LTGN…PLLA, PQYT…DSQQ, PDML…QPQQ, GANH…SQQF, QSTS…PQLQ, RSFR…LHRQ, and LPNA…LGGQ. Low complexity predominate over residues 366–388; sequence NLSNRSNAPSAPSSAPSSPPLLA. A compositionally biased stretch (basic and acidic residues) spans 446-482; the sequence is HEMHYRSTDSRRGPESPPKKFHDALHQDHPITVEQRR. 2 stretches are compositionally biased toward low complexity: residues 560–580 and 603–613; these read QSSG…QPQQ and QGDQQQQSQQF. Polar residues predominate over residues 641 to 651; the sequence is QSTSYHGSAPS. Over residues 1204 to 1217 the composition is skewed to low complexity; the sequence is SRSSSSSLSELSKS. A Phosphoserine modification is found at serine 1248. Basic and acidic residues predominate over residues 1339–1354; sequence ASTVDKENQEEVRTGL. Positions 1339–1372 are disordered; that stretch reads ASTVDKENQEEVRTGLDEPADEDKANSTGLGSDP. Serine 1365 bears the Phosphoserine mark. Positions 1389–1655 constitute a Protein kinase domain; it reads LEELRELGSG…SDIAKELRTM (267 aa). Residues 1395-1403 and lysine 1416 each bind ATP; that span reads LGSGTFGTV. Aspartate 1518 acts as the Proton acceptor in catalysis. The segment at 1661-1680 is disordered; that stretch reads PKTQAQTQGQSHPHPQMQIV.

This sequence belongs to the protein kinase superfamily. Ser/Thr protein kinase family. In terms of processing, hyperphosphorylated in response to auxin. Its phosphorylation state is also rapidly stimulated by photosynthetic activity (e.g. in response to blue light and red light irradiation); dephosphorylated in the darkness.

It is found in the cytoplasm. The catalysed reaction is L-seryl-[protein] + ATP = O-phospho-L-seryl-[protein] + ADP + H(+). It catalyses the reaction L-threonyl-[protein] + ATP = O-phospho-L-threonyl-[protein] + ADP + H(+). Its activity is regulated as follows. Activated by auxin via rapid phosphorylation. Regulated by photosynthesis-activity-dependent changes in its phosphorylation status. Functionally, RAF-like protein kinase acting as a central mediator of a fast response pathway to auxin involving proteins phosphorylation, and leading to rapid cellular responses including membrane depolarization and cytoplasmic streaming. Required for general growth and developmental process. Photosynthesis signaling kinase involved in the regulation of the sucrose metabolism involving PGM1. Necessary for optimal chloroplast electron transport rate (ETR). This Marchantia polymorpha (Common liverwort) protein is RAF-like serine/threonine-protein kinase PRAF.